The chain runs to 540 residues: MSSSSSGNSRHFGRVAPVVLAILDGWGHREELEHNSIRSAETPIMDALWHAYPHTLIEASGAAVGLPDNQMGNSEVGHLTIGAGRVIRQELVRISETVQTGRLGQTPALIALAERLRKSDGTLHLLGLCSDGGVHSHINHLCGLLHWAAAAGLNKVALHLITDGRDTPTQSASNYLHQIEDAINASGVGELASLCGRYWAMDRDHRWERTIRAYEVLTDPNQSISRVTAEDVLSASYANGTTDEFLEPTRLSNNYFKDGDGLVMFNFRPDRARQLVQSLTLPDFDGFPRANQPSLDVVTFTQYEHDLPVAVAFPAESLDDLLGQVVSEHGLRQYRTAETEKYPHVTYFMNGGIEQPLAGEERHLVPSPRVATYDLAPAMSADTLTESCVKAIESGVYSLVIINYANPDMVGHTGVMGAAQEAISTVDRCIGRLLDSTGRMGGTLLITADHGNAELMQGSDGQAWTAHTTNPVPVILVEGEKRKLSGYGNDIQLRAGGGLADIAPTLLQLLDLPKPDAMSGLTLIQAIESPTPSARLPQPV.

2 residues coordinate Mn(2+): Asp24 and Ser74. The active-site Phosphoserine intermediate is Ser74. Substrate contacts are provided by residues His135, 165-166 (RD), Arg197, Arg203, 268-271 (RPDR), and Lys341. Asp408, His412, Asp449, His450, and His467 together coordinate Mn(2+).

This sequence belongs to the BPG-independent phosphoglycerate mutase family. In terms of assembly, monomer. Mn(2+) is required as a cofactor.

It carries out the reaction (2R)-2-phosphoglycerate = (2R)-3-phosphoglycerate. Its pathway is carbohydrate degradation; glycolysis; pyruvate from D-glyceraldehyde 3-phosphate: step 3/5. Functionally, catalyzes the interconversion of 2-phosphoglycerate and 3-phosphoglycerate. This is 2,3-bisphosphoglycerate-independent phosphoglycerate mutase from Prochlorococcus marinus (strain MIT 9303).